Here is a 1083-residue protein sequence, read N- to C-terminus: DNA primase (1083 aa).

The segment at 1022-1061 adopts a CHC2-type zinc-finger fold; it reads CLRYPHRGGRTAPRTFVSLRVDHHNRLCISLAQQCFATKC.

It belongs to the herpesviridae DNA primase family. Associates with the helicase and the primase-associated factor to form the helicase-primase factor.

The protein resides in the host nucleus. Functionally, essential component of the helicase/primase complex. Unwinds the DNA at the replication forks and generates single-stranded DNA for both leading and lagging strand synthesis. The primase initiates primer synthesis and thereby produces large amount of short RNA primers on the lagging strand that the polymerase elongates using dNTPs. The sequence is that of DNA primase from Homo sapiens (Human).